The following is a 346-amino-acid chain: 2,5-dichlorohydroquinone reductive dechlorinase (346 aa).

Residues 43 to 154 form the GST N-terminal domain; the sequence is PRFELFHFVF…YLCDALSGGT (112 aa). In terms of domain architecture, GST C-terminal spans 189–335; the sequence is DRRPESMQAV…AIIQWPGHPP (147 aa).

Belongs to the GST superfamily.

It carries out the reaction 2,5-dichlorohydroquinone + 2 glutathione = chlorohydroquinone + glutathione disulfide + chloride + H(+). The catalysed reaction is chlorohydroquinone + 2 glutathione = hydroquinone + glutathione disulfide + chloride + H(+). The protein operates within xenobiotic degradation; gamma-hexachlorocyclohexane degradation. In terms of biological role, catalyzes the degradation of 2,5-dichlorohydroquinone (2,5-DCHQ) into hydroquinone (HQ) via chlorohydroquinone (CHQ). This Sphingobium indicum (strain DSM 16412 / CCM 7286 / MTCC 6364 / B90A) protein is 2,5-dichlorohydroquinone reductive dechlorinase.